The primary structure comprises 727 residues: Glucans biosynthesis glucosyltransferase H (727 aa).

A disordered region spans residues 17–41 (GSAMPNERPGPMEPQSLSQMPEGFP). The next 6 helical transmembrane spans lie at 58 to 80 (FFVV…AVFS), 95 to 117 (FAIN…LLLL), 407 to 429 (GIMA…MLAL), 457 to 479 (ALRL…VLLL), 499 to 521 (VLFE…CGAV), and 572 to 594 (LLAW…AWTG).

It belongs to the glycosyltransferase 2 family. OpgH subfamily.

Its subcellular location is the cell inner membrane. It functions in the pathway glycan metabolism; osmoregulated periplasmic glucan (OPG) biosynthesis. In terms of biological role, involved in the biosynthesis of osmoregulated periplasmic glucans (OPGs). The protein is Glucans biosynthesis glucosyltransferase H of Shewanella oneidensis (strain ATCC 700550 / JCM 31522 / CIP 106686 / LMG 19005 / NCIMB 14063 / MR-1).